A 1625-amino-acid chain; its full sequence is E3 ubiquitin-protein ligase KEG (1625 aa).

An RING-type zinc finger spans residues 10–56 (CSVCHTRYNEDERVPLLLQCGHGFCKDCLSKMFSTSSDTTLTCPRCR). Acidic residues predominate over residues 91 to 106 (YTDDEDDDDEEDGSDE). Residues 91-110 (YTDDEDDDDEEDGSDEDGAR) form a disordered region. In terms of domain architecture, Protein kinase spans 141–427 (RQIGEESSSG…TFNAMLATFL (287 aa)). Residues 147–155 (SSSGGFGGV) and lysine 176 each bind ATP. 11 ANK repeats span residues 467–496 (DNPNNLHRVVLEGDFEGVRNILAKAAAGGG), 510–540 (DGQSALHLACRRGSAELVEAILEYGEANVDI), 544–573 (DGDPPLVFALAAGSPQCVHVLIKKGANVRS), 579–608 (SGPSVAHVCSYHGQPDCMRELLVAGADPNA), 612–641 (EGETVLHRAVAKKYTDCAIVILENGGSRSM), 647–676 (KCLTPLHMCVATWNVAVIKRWVEVSSPEEI), 685–720 (PVGTALCMAASIRKDHEKEGRELVQILLAAGADPTA), 725–754 (HGRTALHTAAMANNVELVRVILDAGVNANI), 758–787 (HNTIPLHMALARGANSCVSLLLESGSDCNI), 791–826 (EGDNAFHIAADAAKMIRENLDWLIVMLRSPDAAVDV), and 832–863 (KTVRDFLEALPREWISEDLMEALLKRGVHLSP).

In terms of assembly, interacts with ABI5 and EDR1. Autophosphotylated and autoubiquitinated in vitro. Post-translationally, phosphorylation enhances self-ubiquitination. In terms of processing, autoubiquitinated in response to abscisic acid (ABA) and subsequently targeted to proteolysis. Expressed in all tissues of young seedlings. In flowering plants, only detected in the youngest part of the stem, anthers and the receptacle of immature siliques. Not found in mature leave, older parts of the stem, flower parts other than anthers or mature siliques.

Its subcellular location is the golgi apparatus. It is found in the trans-Golgi network. The protein resides in the early endosome. It carries out the reaction L-seryl-[protein] + ATP = O-phospho-L-seryl-[protein] + ADP + H(+). The catalysed reaction is L-threonyl-[protein] + ATP = O-phospho-L-threonyl-[protein] + ADP + H(+). It catalyses the reaction S-ubiquitinyl-[E2 ubiquitin-conjugating enzyme]-L-cysteine + [acceptor protein]-L-lysine = [E2 ubiquitin-conjugating enzyme]-L-cysteine + N(6)-ubiquitinyl-[acceptor protein]-L-lysine.. It functions in the pathway protein modification; protein ubiquitination. Mediates E2-dependent protein ubiquitination. Acts as a negative regulator of abscisic acid signaling. Required for ABI5 degradation, by mediating its ubiquitination. Together with EDR1, may regulate endocytic trafficking and/or the formation of signaling complexes on trans-Golgi network (TGN)/ early endosome (EE) vesicles during stress responses. This chain is E3 ubiquitin-protein ligase KEG (KEG), found in Arabidopsis thaliana (Mouse-ear cress).